The primary structure comprises 73 residues: Translation initiation factor IF-1 (73 aa).

In terms of domain architecture, S1-like spans 1–72 (MAKDEIIEFE…SKGRITYRGK (72 aa)).

This sequence belongs to the IF-1 family. In terms of assembly, component of the 30S ribosomal translation pre-initiation complex which assembles on the 30S ribosome in the order IF-2 and IF-3, IF-1 and N-formylmethionyl-tRNA(fMet); mRNA recruitment can occur at any time during PIC assembly.

The protein localises to the cytoplasm. In terms of biological role, one of the essential components for the initiation of protein synthesis. Stabilizes the binding of IF-2 and IF-3 on the 30S subunit to which N-formylmethionyl-tRNA(fMet) subsequently binds. Helps modulate mRNA selection, yielding the 30S pre-initiation complex (PIC). Upon addition of the 50S ribosomal subunit IF-1, IF-2 and IF-3 are released leaving the mature 70S translation initiation complex. The sequence is that of Translation initiation factor IF-1 from Psychrobacter arcticus (strain DSM 17307 / VKM B-2377 / 273-4).